We begin with the raw amino-acid sequence, 858 residues long: Heat shock protein 105 kDa (858 aa).

N-acetylserine is present on Ser2. Lys471 is subject to N6-acetyllysine. Disordered stretches follow at residues 500–585 and 801–858; these read KVPT…PPEA and VTQP…MDLD. The span at 504 to 515 shows a compositional bias: acidic residues; sequence EEEDGSSLEADM. Phosphoserine occurs at positions 509 and 510. The segment covering 533 to 549 has biased composition (polar residues); that stretch reads QQDNSEAGTQPQVQTDG. Ser558 is modified (phosphoserine). Thr562 is modified (phosphothreonine). 2 stretches are compositionally biased toward basic and acidic residues: residues 564-585 and 806-815; these read EESK…PPEA and PKIESPKLER. Ser810 bears the Phosphoserine mark. Residue Thr816 is modified to Phosphothreonine.

Belongs to the heat shock protein 70 family. As to quaternary structure, interacts with HSPA8/HSC70. Interacts with HSPA1A (via NBD) and HSPA1B (via NBD). Phosphorylation on Ser-509 may be important for regulation of the HSPA8/HSC70 chaperone activity. As to expression, expressed in neurons in the cerebrum and Purkinje cells in the cerebellum (at protein level). Expressed in testis and no expression or only low-level expression in liver, spleen, lung, and kidney (at protein level). Highly expressed in the brain and moderately expressed in lung, heart, thymus, spleen, liver, and small intestine.

The protein resides in the cytoplasm. It is found in the nucleus. Its function is as follows. Acts as a nucleotide-exchange factor (NEF) for chaperone proteins HSPA1A and HSPA1B, promoting the release of ADP from HSPA1A/B thereby triggering client/substrate protein release. Prevents the aggregation of denatured proteins in cells under severe stress, on which the ATP levels decrease markedly. Inhibits HSPA8/HSC70 ATPase and chaperone activities. This Mus musculus (Mouse) protein is Heat shock protein 105 kDa (Hsph1).